The primary structure comprises 284 residues: Bifunctional protein FolD (284 aa).

NADP(+) is bound by residues 166–168 (GAS), S191, and I232.

The protein belongs to the tetrahydrofolate dehydrogenase/cyclohydrolase family. In terms of assembly, homodimer.

It catalyses the reaction (6R)-5,10-methylene-5,6,7,8-tetrahydrofolate + NADP(+) = (6R)-5,10-methenyltetrahydrofolate + NADPH. The enzyme catalyses (6R)-5,10-methenyltetrahydrofolate + H2O = (6R)-10-formyltetrahydrofolate + H(+). It functions in the pathway one-carbon metabolism; tetrahydrofolate interconversion. Functionally, catalyzes the oxidation of 5,10-methylenetetrahydrofolate to 5,10-methenyltetrahydrofolate and then the hydrolysis of 5,10-methenyltetrahydrofolate to 10-formyltetrahydrofolate. This Neisseria meningitidis serogroup C (strain 053442) protein is Bifunctional protein FolD.